Consider the following 379-residue polypeptide: MLSLSLGGQFMNNNIRVGSLFGIPFYVNPSWFLILGLVTLSYGQDLARFPQLSGGTPWILGLITALLLFASVVAHELGHSLVALAQGIEVKSITLFLFGGLASLEKESNTPWQAFAVAIAGPAVSLVLFLGLTIVGTQIPLPVPGQAIIGLLGMINLALALFNLIPGLPLDGGNVLKSIVWQITGNQNKGILIASRVGQGFGWLAIAIGSLGILNILPIGSFWTILIGWFLLQNAGSSARNAQVKEQMEAFTAEDAVIPNSPIIPAGLNIREFANDYVIGKTPWRRFLVIGADNQLLGVLATEDIKHVPTSDWPQVTVDSLMQYPQQMVTVNANQSLFEVAQLLDQQKLSELLVVQPSGEVVGLLEKASIIKCLQTSAA.

2 helical membrane passes run 20 to 40 (LFGIPFYVNPSWFLILGLVTL) and 54 to 74 (GGTPWILGLITALLLFASVVA). A Zn(2+)-binding site is contributed by histidine 75. Residue glutamate 76 is part of the active site. Histidine 79 is a binding site for Zn(2+). 3 consecutive transmembrane segments (helical) span residues 115–135 (FAVAIAGPAVSLVLFLGLTIV), 148–168 (IIGLLGMINLALALFNLIPGL), and 212–232 (GILNILPIGSFWTILIGWFLL). CBS domains are found at residues 257–315 (VIPN…DWPQ) and 322–379 (MQYP…TSAA).

Belongs to the peptidase M50B family. Zn(2+) serves as cofactor.

The protein resides in the cell membrane. The sequence is that of Putative zinc metalloprotease sll0528 from Synechocystis sp. (strain ATCC 27184 / PCC 6803 / Kazusa).